The following is a 216-amino-acid chain: ATP-dependent Clp protease proteolytic subunit (216 aa).

The active-site Nucleophile is the S101. The active site involves H126.

Belongs to the peptidase S14 family. In terms of assembly, component of the chloroplastic Clp protease core complex.

It localises to the plastid. Its subcellular location is the chloroplast stroma. The catalysed reaction is Hydrolysis of proteins to small peptides in the presence of ATP and magnesium. alpha-casein is the usual test substrate. In the absence of ATP, only oligopeptides shorter than five residues are hydrolyzed (such as succinyl-Leu-Tyr-|-NHMec, and Leu-Tyr-Leu-|-Tyr-Trp, in which cleavage of the -Tyr-|-Leu- and -Tyr-|-Trp bonds also occurs).. Its function is as follows. Cleaves peptides in various proteins in a process that requires ATP hydrolysis. Has a chymotrypsin-like activity. Plays a major role in the degradation of misfolded proteins. The protein is ATP-dependent Clp protease proteolytic subunit of Hordeum vulgare (Barley).